A 972-amino-acid polypeptide reads, in one-letter code: N-alpha-acetyltransferase 25, NatB auxiliary subunit (972 aa).

TPR repeat units lie at residues 11-44, 45-78, 79-112, and 114-146; these read NDRRLRPIYDYLDNGNNKMAIQQADKLLKKHKDL, HCAKVLKAIGLQRTGKQEEAFTLAQEVAALEPTD, DNSLQALTILYREMHRPELVTKLYEAAVKKVPNS, and EYHSHLFMAYARVGEYKKMQQAGMALYKIVPKN.

Belongs to the MDM20/NAA25 family. In terms of assembly, component of the N-terminal acetyltransferase B (NatB) complex which is composed of NAA20 and NAA25.

The protein resides in the cytoplasm. Non-catalytic subunit of the NatB complex which catalyzes acetylation of the N-terminal methionine residues of peptides beginning with Met-Asp, Met-Glu, Met-Asn and Met-Gln. May play a role in normal cell-cycle progression. The polypeptide is N-alpha-acetyltransferase 25, NatB auxiliary subunit (NAA25) (Homo sapiens (Human)).